Consider the following 370-residue polypeptide: Histidinol-phosphate aminotransferase (370 aa).

Lysine 223 bears the N6-(pyridoxal phosphate)lysine mark.

It belongs to the class-II pyridoxal-phosphate-dependent aminotransferase family. Histidinol-phosphate aminotransferase subfamily. As to quaternary structure, homodimer. It depends on pyridoxal 5'-phosphate as a cofactor.

The enzyme catalyses L-histidinol phosphate + 2-oxoglutarate = 3-(imidazol-4-yl)-2-oxopropyl phosphate + L-glutamate. It participates in amino-acid biosynthesis; L-histidine biosynthesis; L-histidine from 5-phospho-alpha-D-ribose 1-diphosphate: step 7/9. In Methylobacterium sp. (strain 4-46), this protein is Histidinol-phosphate aminotransferase.